Consider the following 335-residue polypeptide: Cathepsin B (335 aa).

The first 17 residues, 1 to 17, serve as a signal peptide directing secretion; the sequence is MWRLLATLSCLVLLTSA. Positions 18–79 are cleaved as a propeptide — activation peptide; sequence RESLHFQPLS…QRAAFAADMI (62 aa). Intrachain disulfides connect Cys93/Cys122, Cys105/Cys150, Cys141/Cys207, Cys142/Cys146, Cys179/Cys211, and Cys187/Cys198. The active site involves Cys108. An N-linked (GlcNAc...) asparagine glycan is attached at Asn192. At Lys220 the chain carries N6-acetyllysine. A disulfide bridge links Cys227 with Cys331. Active-site residues include His278 and Asn298. Residues 333–335 constitute a propeptide that is removed on maturation; sequence PHF.

This sequence belongs to the peptidase C1 family. In terms of assembly, dimer of a heavy chain and a light chain cross-linked by a disulfide bond. Interacts with SRPX2. Directly interacts with SHKBP1. Expressed in heart (at protein level).

The protein localises to the lysosome. It localises to the melanosome. It is found in the secreted. The protein resides in the extracellular space. Its subcellular location is the apical cell membrane. It carries out the reaction Hydrolysis of proteins with broad specificity for peptide bonds. Preferentially cleaves -Arg-Arg-|-Xaa bonds in small molecule substrates (thus differing from cathepsin L). In addition to being an endopeptidase, shows peptidyl-dipeptidase activity, liberating C-terminal dipeptides.. Thiol protease which is believed to participate in intracellular degradation and turnover of proteins. Cleaves matrix extracellular phosphoglycoprotein MEPE. Involved in the solubilization of cross-linked TG/thyroglobulin in the thyroid follicle lumen. Has also been implicated in tumor invasion and metastasis. This is Cathepsin B (CTSB) from Sus scrofa (Pig).